Reading from the N-terminus, the 205-residue chain is Peptidyl-tRNA hydrolase (205 aa).

Tyr18 serves as a coordination point for tRNA. Residue His23 is the Proton acceptor of the active site. Positions 69, 71, and 117 each coordinate tRNA.

The protein belongs to the PTH family. As to quaternary structure, monomer.

The protein resides in the cytoplasm. The catalysed reaction is an N-acyl-L-alpha-aminoacyl-tRNA + H2O = an N-acyl-L-amino acid + a tRNA + H(+). In terms of biological role, hydrolyzes ribosome-free peptidyl-tRNAs (with 1 or more amino acids incorporated), which drop off the ribosome during protein synthesis, or as a result of ribosome stalling. Functionally, catalyzes the release of premature peptidyl moieties from peptidyl-tRNA molecules trapped in stalled 50S ribosomal subunits, and thus maintains levels of free tRNAs and 50S ribosomes. The sequence is that of Peptidyl-tRNA hydrolase from Synechococcus sp. (strain CC9605).